A 281-amino-acid polypeptide reads, in one-letter code: Leukocyte antigen CD37 (281 aa).

Topologically, residues 1 to 17 (MSAQESCLSLIKYFLFV) are cytoplasmic. A helical transmembrane segment spans residues 18–38 (FNLFFFVLGGLIFCFGTWILI). At 39–59 (DKTSFVSFVGLSFVPLQTWSK) the chain is on the extracellular side. The helical transmembrane segment at 60–74 (VLAVSGVLTMALALL) threads the bilayer. The Cytoplasmic segment spans residues 75–85 (GCVGALKELRC). The chain crosses the membrane as a helical span at residues 86–111 (LLGLYFGMLLLLFATQITLGILISTQ). The Extracellular portion of the chain corresponds to 112–241 (RVRLERRVQE…QSLQKWLHNN (130 aa)). 3 N-linked (GlcNAc...) asparagine glycosylation sites follow: Asn-170, Asn-183, and Asn-188. A helical transmembrane segment spans residues 242 to 266 (IISIVGICLGVGLLELGFMTLSIFL). Over 267–281 (CRNLDHVYDRLARYR) the chain is Cytoplasmic.

Belongs to the tetraspanin (TM4SF) family. In terms of assembly, interacts with SCIMP. Interacts with SOCS3. Interacts with DECTIN1/CLEC7A. Post-translationally, tyrosine phosphorylated; leading to activation of downstream signaling pathways.

Its subcellular location is the cell membrane. In terms of biological role, structural component of specialized membrane microdomains known as tetraspanin-enriched microdomains (TERMs), which act as platforms for receptor clustering and signaling. Participates thereby in diverse biological functions such as cell signal transduction, adhesion, migration and protein trafficking. Upon ligand binding, two signaling pathways are activated, one acting through phosphorylation by LYN leading to cell death or a survival pathway with activation of GSK3B. Plays an essential role for clustering of integrin ITGA4/ITGB1 and promotes its mobility in the plasma membrane of B-cells. In turn, participates in ITGA4/ITGB1 integrin-mediated antiapoptotic signaling through AKT. Also plays a role in the migration of dendritic cells and neutrophils to draining lymph nodes, as well as in their integrin-mediated adhesion. Negatively regulates IL-6 responses through direct interaction with SOCS3 thereby preventing constitutive IL-6 signaling. Alternatively, inhibition of IL-6 signaling can also occur via interaction and stabilization of DECTIN1/CLEC7A at the cell membrane to inhibit its ability to promote the production of IL-6. The chain is Leukocyte antigen CD37 (Cd37) from Mus musculus (Mouse).